Here is a 448-residue protein sequence, read N- to C-terminus: uncharacterized protein (448 aa).

Residue Lys280 is modified to N6-(pyridoxal phosphate)lysine.

This sequence belongs to the class-III pyridoxal-phosphate-dependent aminotransferase family.

The protein resides in the cytoplasm. It is found in the mitochondrion. This is an uncharacterized protein from Schizosaccharomyces pombe (strain 972 / ATCC 24843) (Fission yeast).